The following is a 952-amino-acid chain: Chaperone protein ClpC2, chloroplastic (952 aa).

Residues 1–45 (MAWSIALLTPPFFGPGRHVQAKEYREPRGCVMKMSSLKAPVLRIQ) constitute a chloroplast transit peptide. In terms of domain architecture, Clp R spans 115–257 (FERFTEKAIK…RTQVIRMVGE (143 aa)). 2 repeat regions span residues 118 to 183 (FTEK…IGRG) and 193 to 257 (FTPR…MVGE). Residues 278 to 525 (LEEYGTNLTK…RVRLRHAQLP (248 aa)) form an i region. 323-330 (GEPGVGKT) contacts ATP. In terms of domain architecture, UVR spans 532–567 (EKQLRQITKEKNEAVRSQDFEMAGSHRDREIELKAE). The II stretch occupies residues 592-783 (VTESDIQHIV…LLIMTSNVGS (192 aa)). 666-673 (GPTGVGKS) is a binding site for ATP.

The protein belongs to the ClpA/ClpB family. ClpC subfamily. Homodimer and homohexamer. Hexamerization upon addition of ATP. Interacts with CLPT1. Interacts with CLPS1. Stably associated with the import machinery. Interacts with CLPF. Requires Mg(2+) as cofactor. Expressed at low levels in roots and inflorescences. Expressed at very low levels in rosette leaves. Expressed in photosynthetic green tissues with high levels in young, developing leaf tissues.

The protein resides in the plastid. It localises to the chloroplast stroma. It is found in the chloroplast membrane. It catalyses the reaction ATP + H2O = ADP + phosphate + H(+). Its function is as follows. Molecular chaperone. May act as a suppressor of FtsH-mediated thylakoid membrane biogenesis and may enhance photoinhibition. Seems not involved in chloroplastic protein import. Probable component of the TIC-associated stromal import motor involved in inner membrane translocation. Has an ATPase activity, but no ADPase activity. Interacts with transit peptides with a positional preference. Localization of the signal sequence at the N-terminal end of a protein seems mandatory for interaction to take place. This is Chaperone protein ClpC2, chloroplastic from Arabidopsis thaliana (Mouse-ear cress).